The chain runs to 565 residues: MSNGVSVRVLAVQQALETEFSLVEASGNPSSVGSCVARVWLPPKNEATWLLKRYAEDVTYLHHILHLPSVRQQMEDLYKQLSLGLRIEPCHVALILSIFASTAYTLTPLTGGDAVFTNEQTAVKCAFLWSKMALDVLEHSSRSTPGSIEDIQATIILSFVIFNFEGFTMRFRALSASALTMARDLSLHRLDARPDRLPGPHAPLDSDIGREIKRRVWWHMVSTDWILALSGGPQEGTYLMHPAHMRVNYPRNLDDRDLDRYNPQYSRPLSQPTAMTYTLLRIQLADICRSAIDALPPPFSDWGEVNYDRFISLDQRFEAFIRSLPVFFRLDEASRHQSRDVEHQYPQIIVQRYILWSTLQGRRSKLNQPFLTRVSMNPRYQYSRKVCLQSARCVIELKALMDHDMASLASAHVRLATFLHNYFLATAVLVMDLCLNKEGGSSEDRRQEIVDACRVLQEAEATSPMASRFLKSLMDILQKYQIQVLPATTVPDVRPLSANTGASGVPDPNLSDRDLVNPSQILPSTYDPLENANIDDLWQNFINLDQNCSPGSWDHLFSALDSRIV.

The tract at residues 52 to 259 is fungal specific transcription factor domain; that stretch reads KRYAEDVTYL…PRNLDDRDLD (208 aa).

Its subcellular location is the nucleus. In terms of biological role, probable transcription factor; part of the gene cluster 23 that mediates the biosynthesis of a family of 2-pyridones known as leporins. The polypeptide is Probable transcription factor lepB (Aspergillus flavus (strain ATCC 200026 / FGSC A1120 / IAM 13836 / NRRL 3357 / JCM 12722 / SRRC 167)).